Here is a 517-residue protein sequence, read N- to C-terminus: Aldehyde dehydrogenase, mitochondrial (517 aa).

The transit peptide at 1-17 (MLRAAARFGPRLGRRLL) directs the protein to the mitochondrion. The short motif at 9 to 24 (GPRLGRRLLSAAATQA) is the SIFI-degron element. Residues K52, K73, K78, and K159 each carry the N6-acetyllysine modification. An NAD(+)-binding site is contributed by 262-267 (GSTEIG). Catalysis depends on E285, which acts as the Proton acceptor. C319 acts as the Nucleophile in catalysis. 5 positions are modified to N6-acetyllysine: K368, K383, K426, K428, and K451.

It belongs to the aldehyde dehydrogenase family. In terms of assembly, homotetramer. In response to mitochondrial stress, the precursor protein is ubiquitinated by the SIFI complex in the cytoplasm before mitochondrial import, leading to its degradation. Within the SIFI complex, UBR4 initiates ubiquitin chain that are further elongated or branched by KCMF1.

It localises to the mitochondrion matrix. It catalyses the reaction an aldehyde + NAD(+) + H2O = a carboxylate + NADH + 2 H(+). It participates in alcohol metabolism; ethanol degradation; acetate from ethanol: step 2/2. In terms of biological role, required for clearance of cellular formaldehyde, a cytotoxic and carcinogenic metabolite that induces DNA damage. This Homo sapiens (Human) protein is Aldehyde dehydrogenase, mitochondrial (ALDH2).